The sequence spans 376 residues: Homoserine dehydrogenase (376 aa).

2 residues coordinate NADP(+): asparagine 17 and isoleucine 18. Isoleucine 18 lines the NAD(+) pocket. The NADPH site is built by isoleucine 18, lysine 67, threonine 99, and lysine 123. NADP(+)-binding residues include threonine 99 and lysine 123. Threonine 99 contacts NAD(+). Na(+) contacts are provided by glutamate 150, valine 153, alanine 155, and leucine 157. Position 201 is a phosphoserine (serine 201). Positions 213 and 216 each coordinate NADP(+). Positions 216 and 227 each coordinate L-homoserine. The active-site Proton donor is lysine 231. NADP(+) is bound at residue glycine 349. Residue glycine 349 participates in NAD(+) binding. Residue glycine 349 participates in NADPH binding.

This sequence belongs to the homoserine dehydrogenase family. A metal cation serves as cofactor.

The enzyme catalyses L-homoserine + NADP(+) = L-aspartate 4-semialdehyde + NADPH + H(+). It carries out the reaction L-homoserine + NAD(+) = L-aspartate 4-semialdehyde + NADH + H(+). It functions in the pathway amino-acid biosynthesis; L-methionine biosynthesis via de novo pathway; L-homoserine from L-aspartate: step 3/3. Its pathway is amino-acid biosynthesis; L-threonine biosynthesis; L-threonine from L-aspartate: step 3/5. In terms of biological role, catalyzes the conversion of L-aspartate-beta-semialdehyde (L-Asa) to L-homoserine (L-Hse), the third step in the biosynthesis of amino acids that derive from aspartate (the aspartate family of amino acids), including methioinine and threonine, the latter of which is a precursor to isoleucine; production of homoserine leads to a branch-point in the pathway as it can either be O-phosphorylated for processing to threonine, or O-acylated for processing to methionine. In Schizosaccharomyces pombe (strain 972 / ATCC 24843) (Fission yeast), this protein is Homoserine dehydrogenase.